A 369-amino-acid chain; its full sequence is Maltose/maltodextrin import ATP-binding protein MalK (369 aa).

The region spanning 4–234 (VTLHNVSKAY…PVNRFVASFI (231 aa)) is the ABC transporter domain. Residue 36 to 43 (GPSGCGKS) coordinates ATP.

The protein belongs to the ABC transporter superfamily. Maltooligosaccharide importer (TC 3.A.1.1.1) family. As to quaternary structure, the complex is composed of two ATP-binding proteins (MalK), two transmembrane proteins (MalG and MalK) and a solute-binding protein (MalE).

It is found in the cell inner membrane. The enzyme catalyses D-maltose(out) + ATP + H2O = D-maltose(in) + ADP + phosphate + H(+). Part of the ABC transporter complex MalEFGK involved in maltose/maltodextrin import. Responsible for energy coupling to the transport system. This Photorhabdus laumondii subsp. laumondii (strain DSM 15139 / CIP 105565 / TT01) (Photorhabdus luminescens subsp. laumondii) protein is Maltose/maltodextrin import ATP-binding protein MalK.